Consider the following 484-residue polypeptide: Glutamyl-tRNA(Gln) amidotransferase subunit A (484 aa).

Residues K77 and S152 each act as charge relay system in the active site. The Acyl-ester intermediate role is filled by S176.

It belongs to the amidase family. GatA subfamily. Heterotrimer of A, B and C subunits.

It catalyses the reaction L-glutamyl-tRNA(Gln) + L-glutamine + ATP + H2O = L-glutaminyl-tRNA(Gln) + L-glutamate + ADP + phosphate + H(+). Allows the formation of correctly charged Gln-tRNA(Gln) through the transamidation of misacylated Glu-tRNA(Gln) in organisms which lack glutaminyl-tRNA synthetase. The reaction takes place in the presence of glutamine and ATP through an activated gamma-phospho-Glu-tRNA(Gln). This Pseudomonas aeruginosa (strain ATCC 15692 / DSM 22644 / CIP 104116 / JCM 14847 / LMG 12228 / 1C / PRS 101 / PAO1) protein is Glutamyl-tRNA(Gln) amidotransferase subunit A.